We begin with the raw amino-acid sequence, 591 residues long: Aspartate--tRNA ligase (591 aa).

Glu-172 is a binding site for L-aspartate. Residues 196–199 (QLFK) form an aspartate region. Residue Arg-218 participates in L-aspartate binding. ATP contacts are provided by residues 218–220 (RDE) and Gln-227. His-449 lines the L-aspartate pocket. ATP is bound at residue Glu-483. Arg-490 serves as a coordination point for L-aspartate. 535-538 (GLDR) is an ATP binding site.

The protein belongs to the class-II aminoacyl-tRNA synthetase family. Type 1 subfamily. As to quaternary structure, homodimer.

The protein localises to the cytoplasm. It carries out the reaction tRNA(Asp) + L-aspartate + ATP = L-aspartyl-tRNA(Asp) + AMP + diphosphate. Its function is as follows. Catalyzes the attachment of L-aspartate to tRNA(Asp) in a two-step reaction: L-aspartate is first activated by ATP to form Asp-AMP and then transferred to the acceptor end of tRNA(Asp). The protein is Aspartate--tRNA ligase of Actinobacillus pleuropneumoniae serotype 7 (strain AP76).